The sequence spans 189 residues: Ribosome-recycling factor (189 aa).

The protein belongs to the RRF family.

It is found in the cytoplasm. Responsible for the release of ribosomes from messenger RNA at the termination of protein biosynthesis. May increase the efficiency of translation by recycling ribosomes from one round of translation to another. This Salinibacter ruber (strain DSM 13855 / M31) protein is Ribosome-recycling factor.